The following is a 147-amino-acid chain: Large ribosomal subunit protein uL15 (147 aa).

Residues 1–57 (MRLEDLRPTPGSMKKRKRVGRGPGSGHGKTSGRGHKGQKARGTGKVHPWFEGGQTPL) form a disordered region. Residues 30–44 (TSGRGHKGQKARGTG) are compositionally biased toward basic residues.

Belongs to the universal ribosomal protein uL15 family. In terms of assembly, part of the 50S ribosomal subunit.

In terms of biological role, binds to the 23S rRNA. This chain is Large ribosomal subunit protein uL15, found in Thermotoga neapolitana (strain ATCC 49049 / DSM 4359 / NBRC 107923 / NS-E).